The following is an 822-amino-acid chain: MDGALFPHKPPYPIQSKRPPPSQSSNQSIKFSSATLHLPPPSPPSFPLDSLLHHLVHLSSPPPRHSNSAAARFPSLEVSTDSSSSKPILGIEIENERNGSLKLLCKKEVVLVNSIVEQPLTGLSRFFDSVKSELLRTDLVSLVKGLDDSGHWERAVFLFEWLVLSSNSGALKLDHQVIEIFVRILGRESQYSVAAKLLDKIPLQEYLLDVRAYTTILHAYSRTGKYEKAIDLFERMKEMGPSPTLVTYNVILDVFGKMGRSWRKILGVLDEMRSKGLKFDEFTCSTVLSACAREGLLREAKEFFAELKSCGYEPGTVTYNALLQVFGKAGVYTEALSVLKEMEENSCPADSVTYNELVAAYVRAGFSKEAAGVIEMMTKKGVMPNAITYTTVIDAYGKAGKEDEALKLFYSMKEAGCVPNTCTYNAVLSLLGKKSRSNEMIKMLCDMKSNGCSPNRATWNTMLALCGNKGMDKFVNRVFREMKSCGFEPDRDTFNTLISAYGRCGSEVDASKMYGEMTRAGFNACVTTYNALLNALARKGDWRSGENVISDMKSKGFKPTETSYSLMLQCYAKGGNYLGIERIENRIKEGQIFPSWMLLRTLLLANFKCRALAGSERAFTLFKKHGYKPDMVIFNSMLSIFTRNNMYDQAEGILESIREDGLSPDLVTYNSLMDMYVRRGECWKAEEILKTLEKSQLKPDLVSYNTVIKGFCRRGLMQEAVRMLSEMTERGIRPCIFTYNTFVSGYTAMGMFAEIEDVIECMAKNDCRPNELTFKMVVDGYCRAGKYSEAMDFVSKIKTFDPCFDDQSIQRLALRVRENLES.

A disordered region spans residues 1–42 (MDGALFPHKPPYPIQSKRPPPSQSSNQSIKFSSATLHLPPPS). The N-terminal 77 residues, 1 to 77 (MDGALFPHKP…SAAARFPSLE (77 aa)), are a transit peptide targeting the chloroplast. Residues 8 to 22 (HKPPYPIQSKRPPPS) show a composition bias toward pro residues. Residues 23–37 (QSSNQSIKFSSATLH) are compositionally biased toward low complexity. 17 PPR repeats span residues 209-243 (DVRA…GPSP), 244-279 (TLVT…GLKF), 280-314 (DEFT…GYEP), 315-349 (GTVT…SCPA), 350-384 (DSVT…GVMP), 385-419 (NAIT…GCVP), 420-454 (NTCT…GCSP), 455-489 (NRAT…GFEP), 490-524 (DRDT…GFNA), 525-559 (CVTT…GFKP), 560-594 (TETS…QIFP), 595-629 (SWML…GYKP), 630-664 (DMVI…GLSP), 665-699 (DLVT…QLKP), 700-734 (DLVS…GIRP), 735-769 (CIFT…DCRP), and 770-800 (NELT…IKTF).

It belongs to the PPR family. P subfamily.

It localises to the plastid. It is found in the chloroplast. The sequence is that of Pentatricopeptide repeat-containing protein At2g18940, chloroplastic from Arabidopsis thaliana (Mouse-ear cress).